The primary structure comprises 84 residues: Large ribosomal subunit protein bL27 (84 aa).

The tract at residues 1–21 (MATKKAGGSSRNGRDSAGRRL) is disordered.

Belongs to the bacterial ribosomal protein bL27 family.

The protein is Large ribosomal subunit protein bL27 of Pelagibacter ubique (strain HTCC1062).